Consider the following 155-residue polypeptide: D-aminoacyl-tRNA deacylase (155 aa).

Positions 147–148 (GP) match the Gly-cisPro motif, important for rejection of L-amino acids motif.

The protein belongs to the DTD family. As to quaternary structure, homodimer.

The protein resides in the cytoplasm. The catalysed reaction is glycyl-tRNA(Ala) + H2O = tRNA(Ala) + glycine + H(+). The enzyme catalyses a D-aminoacyl-tRNA + H2O = a tRNA + a D-alpha-amino acid + H(+). An aminoacyl-tRNA editing enzyme that deacylates mischarged D-aminoacyl-tRNAs. Also deacylates mischarged glycyl-tRNA(Ala), protecting cells against glycine mischarging by AlaRS. Acts via tRNA-based rather than protein-based catalysis; rejects L-amino acids rather than detecting D-amino acids in the active site. By recycling D-aminoacyl-tRNA to D-amino acids and free tRNA molecules, this enzyme counteracts the toxicity associated with the formation of D-aminoacyl-tRNA entities in vivo and helps enforce protein L-homochirality. This Corynebacterium urealyticum (strain ATCC 43042 / DSM 7109) protein is D-aminoacyl-tRNA deacylase.